We begin with the raw amino-acid sequence, 224 residues long: UPF0758 protein lmo1549 (224 aa).

Positions 102–224 constitute an MPN domain; it reads VVRCPEDAVK…YISLKEKGYF (123 aa). His-173, His-175, and Asp-186 together coordinate Zn(2+). The short motif at 173-186 is the JAMM motif element; that stretch reads HNHPSGDPTPSSED.

This sequence belongs to the UPF0758 family.

The chain is UPF0758 protein lmo1549 from Listeria monocytogenes serovar 1/2a (strain ATCC BAA-679 / EGD-e).